Here is a 321-residue protein sequence, read N- to C-terminus: Malate dehydrogenase (321 aa).

NAD(+) is bound by residues Gly-10–Gly-15 and Asp-34. Positions 83 and 89 each coordinate substrate. NAD(+) is bound by residues Asn-96 and Ile-119 to Asn-121. Asn-121 and Arg-152 together coordinate substrate. The active-site Proton acceptor is the His-176.

It belongs to the LDH/MDH superfamily. MDH type 3 family.

It catalyses the reaction (S)-malate + NAD(+) = oxaloacetate + NADH + H(+). Catalyzes the reversible oxidation of malate to oxaloacetate. The protein is Malate dehydrogenase of Methylocella silvestris (strain DSM 15510 / CIP 108128 / LMG 27833 / NCIMB 13906 / BL2).